The primary structure comprises 238 residues: Adapter protein MecA (238 aa).

The disordered stretch occupies residues 108 to 133 (EDENEESVQGNQQQRRSHASDHSKRA).

The protein belongs to the MecA family. In terms of assembly, homodimer.

In terms of biological role, enables the recognition and targeting of unfolded and aggregated proteins to the ClpC protease or to other proteins involved in proteolysis. This is Adapter protein MecA from Staphylococcus carnosus (strain TM300).